An 82-amino-acid chain; its full sequence is RNA-binding protein Hfq (82 aa).

One can recognise a Sm domain in the interval 9-69 (DQLLNTARKD…ISTIIPAKII (61 aa)).

Belongs to the Hfq family. As to quaternary structure, homohexamer.

Its function is as follows. RNA chaperone that binds small regulatory RNA (sRNAs) and mRNAs to facilitate mRNA translational regulation in response to envelope stress, environmental stress and changes in metabolite concentrations. Also binds with high specificity to tRNAs. This is RNA-binding protein Hfq from Leptospira borgpetersenii serovar Hardjo-bovis (strain L550).